Here is a 473-residue protein sequence, read N- to C-terminus: Ribulose bisphosphate carboxylase large chain (473 aa).

Positions 1-2 (MS) are excised as a propeptide. The substrate site is built by N123 and T173. Residue K175 is the Proton acceptor of the active site. K177 is a binding site for substrate. Positions 201, 203, and 204 each coordinate Mg(2+). The residue at position 201 (K201) is an N6-carboxylysine. S208 carries the phosphoserine modification. H294 (proton acceptor) is an active-site residue. The substrate site is built by R295 and H327. T330 is subject to Phosphothreonine. S379 contributes to the substrate binding site.

It belongs to the RuBisCO large chain family. Type I subfamily. In terms of assembly, heterohexadecamer of 8 large chains and 8 small chains; disulfide-linked. The disulfide link is formed within the large subunit homodimers. Mg(2+) is required as a cofactor. Post-translationally, the disulfide bond which can form in the large chain dimeric partners within the hexadecamer appears to be associated with oxidative stress and protein turnover.

The protein resides in the plastid. The protein localises to the chloroplast. The enzyme catalyses 2 (2R)-3-phosphoglycerate + 2 H(+) = D-ribulose 1,5-bisphosphate + CO2 + H2O. The catalysed reaction is D-ribulose 1,5-bisphosphate + O2 = 2-phosphoglycolate + (2R)-3-phosphoglycerate + 2 H(+). Functionally, ruBisCO catalyzes two reactions: the carboxylation of D-ribulose 1,5-bisphosphate, the primary event in carbon dioxide fixation, as well as the oxidative fragmentation of the pentose substrate in the photorespiration process. Both reactions occur simultaneously and in competition at the same active site. This chain is Ribulose bisphosphate carboxylase large chain, found in Sinapis alba (White mustard).